The sequence spans 228 residues: Fluoride-specific ion channel FluC (228 aa).

The next 7 membrane-spanning stretches (helical) occupy residues 3-23 (LSLF…FWVS), 37-57 (GTLF…VMMI), 72-92 (VGFL…LALF), 101-121 (ALNV…GAVL), 141-161 (IFGA…LAFA), 172-192 (LVLV…LVVT), and 202-222 (LWGA…LGLV). 2 residues coordinate Na(+): glycine 76 and threonine 79.

This sequence belongs to the fluoride channel Fluc/FEX (TC 1.A.43) family.

Its subcellular location is the cell inner membrane. The enzyme catalyses fluoride(in) = fluoride(out). With respect to regulation, na(+) is not transported, but it plays an essential structural role and its presence is essential for fluoride channel function. In terms of biological role, fluoride-specific ion channel. Important for reducing fluoride concentration in the cell, thus reducing its toxicity. The chain is Fluoride-specific ion channel FluC from Methylococcus capsulatus (strain ATCC 33009 / NCIMB 11132 / Bath).